Consider the following 647-residue polypeptide: Acetyl-coenzyme A synthetase (647 aa).

CoA contacts are provided by residues 190–193, Thr-310, and Asn-334; that span reads RGGK. Residues 386–388, 410–415, Asp-499, and Arg-514 contribute to the ATP site; these read GEP and DTWWQT. Ser-522 lines the CoA pocket. Residue Arg-525 participates in ATP binding. Mg(2+)-binding residues include Val-536, His-538, and Val-541. CoA is bound at residue Arg-583. Position 608 is an N6-acetyllysine (Lys-608).

It belongs to the ATP-dependent AMP-binding enzyme family. Requires Mg(2+) as cofactor. Acetylated. Deacetylation by the SIR2-homolog deacetylase activates the enzyme.

It catalyses the reaction acetate + ATP + CoA = acetyl-CoA + AMP + diphosphate. Its function is as follows. Catalyzes the conversion of acetate into acetyl-CoA (AcCoA), an essential intermediate at the junction of anabolic and catabolic pathways. AcsA undergoes a two-step reaction. In the first half reaction, AcsA combines acetate with ATP to form acetyl-adenylate (AcAMP) intermediate. In the second half reaction, it can then transfer the acetyl group from AcAMP to the sulfhydryl group of CoA, forming the product AcCoA. The sequence is that of Acetyl-coenzyme A synthetase from Xanthomonas oryzae pv. oryzae (strain MAFF 311018).